We begin with the raw amino-acid sequence, 958 residues long: Translation initiation factor IF-2 (958 aa).

Residues 50-67 (FKPAAAPKVEAKPAAPKV) are compositionally biased toward low complexity. Disordered stretches follow at residues 50–224 (FKPA…RIDF) and 288–374 (EVVP…HELP). Composition is skewed to basic and acidic residues over residues 68-89 (SAEKKAEKSEPAKPAVAKEEAK), 96-118 (SAEKKAEKSEPVKPAVAKEEAKP), and 138-153 (FKAEREARAKEQAERR). Positions 157–169 (KGNNRDQQQNGNR) are enriched in low complexity. 2 stretches are compositionally biased toward basic and acidic residues: residues 185-195 (RDNRRFNDQAK) and 290-323 (VPEKKEPAVDTRRKKQARPDKNRDDYDHEEDGPR). Over residues 337 to 346 (NQKNSNWNNN) the composition is skewed to low complexity. Positions 365–374 (VTERKFHELP) are enriched in basic and acidic residues. Positions 460 to 627 (ERPPVVTIMG…TVLLVAEIQE (168 aa)) constitute a tr-type G domain. The interval 469 to 476 (GHVDHGKT) is G1. 469–476 (GHVDHGKT) contributes to the GTP binding site. Residues 494–498 (GITQH) are G2. Residues 515 to 518 (DTPG) are G3. GTP is bound by residues 515 to 519 (DTPGH) and 569 to 572 (NKID). Positions 569–572 (NKID) are G4. The segment at 605–607 (SAK) is G5.

This sequence belongs to the TRAFAC class translation factor GTPase superfamily. Classic translation factor GTPase family. IF-2 subfamily.

The protein resides in the cytoplasm. Functionally, one of the essential components for the initiation of protein synthesis. Protects formylmethionyl-tRNA from spontaneous hydrolysis and promotes its binding to the 30S ribosomal subunits. Also involved in the hydrolysis of GTP during the formation of the 70S ribosomal complex. This is Translation initiation factor IF-2 from Streptococcus pneumoniae serotype 4 (strain ATCC BAA-334 / TIGR4).